The following is a 262-amino-acid chain: Small ribosomal subunit protein uS2 (262 aa).

The segment at 228–262 is disordered; it reads VSNEEVAAEQNINLDDKEESEQAETTEENTSVESN. Positions 243 to 254 are enriched in acidic residues; the sequence is DKEESEQAETTE.

The protein belongs to the universal ribosomal protein uS2 family.

The sequence is that of Small ribosomal subunit protein uS2 from Staphylococcus epidermidis (strain ATCC 35984 / DSM 28319 / BCRC 17069 / CCUG 31568 / BM 3577 / RP62A).